A 212-amino-acid chain; its full sequence is NAD(P)H-hydrate epimerase (212 aa).

One can recognise a YjeF N-terminal domain in the interval 11–212 (MRHYDSYTIN…ANDMGTYAVD (202 aa)). (6S)-NADPHX is bound at residue 60–64 (NNGGD). Positions 61 and 123 each coordinate K(+). Residues 127–133 (GIGIDRA), Tyr-138, and Asp-156 contribute to the (6S)-NADPHX site. Ser-159 contacts K(+).

The protein belongs to the NnrE/AIBP family. It depends on K(+) as a cofactor.

The enzyme catalyses (6R)-NADHX = (6S)-NADHX. It carries out the reaction (6R)-NADPHX = (6S)-NADPHX. In terms of biological role, catalyzes the epimerization of the S- and R-forms of NAD(P)HX, a damaged form of NAD(P)H that is a result of enzymatic or heat-dependent hydration. This is a prerequisite for the S-specific NAD(P)H-hydrate dehydratase to allow the repair of both epimers of NAD(P)HX. The polypeptide is NAD(P)H-hydrate epimerase (Limosilactobacillus reuteri (strain ATCC 55730 / SD2112) (Lactobacillus reuteri)).